The primary structure comprises 379 residues: Orotidine 5'-phosphate decarboxylase (379 aa).

Residues aspartate 42, 64-66, and 99-108 each bind substrate; these read KTH and DRKFGDIGHT. The active-site Proton donor is lysine 101. The disordered stretch occupies residues 165-198; sequence PTMDQFDDAEDAKDDEPATVNDNGSNMMEKPIYA. Residues 169 to 178 show a composition bias toward acidic residues; sequence QFDDAEDAKD. Substrate-binding residues include tyrosine 331 and arginine 350.

It belongs to the OMP decarboxylase family.

The catalysed reaction is orotidine 5'-phosphate + H(+) = UMP + CO2. It participates in pyrimidine metabolism; UMP biosynthesis via de novo pathway; UMP from orotate: step 2/2. In Hypocrea atroviridis (Trichoderma atroviride), this protein is Orotidine 5'-phosphate decarboxylase (pyr4).